The chain runs to 478 residues: Cytochrome c-552 (478 aa).

Residues 1-26 (MARKTLRARRFFSLIFPFFFMTSVYA) form the signal peptide. His-94 serves as a coordination point for heme c. The heme site is built by Cys-122, Cys-125, and Lys-126. Heme c-binding residues include Cys-160, Cys-163, His-164, Cys-209, Cys-212, and His-213. Residues Glu-215, Tyr-216, Lys-261, and Gln-263 each contribute to the Ca(2+) site. Tyr-216 is a substrate binding site. A substrate-binding site is contributed by His-264. His-275, Cys-282, Cys-285, His-286, His-301, Cys-314, Cys-317, His-318, and His-393 together coordinate heme c.

It belongs to the cytochrome c-552 family. Ca(2+) serves as cofactor. Requires heme c as cofactor.

It localises to the periplasm. The enzyme catalyses 6 Fe(III)-[cytochrome c] + NH4(+) + 2 H2O = 6 Fe(II)-[cytochrome c] + nitrite + 8 H(+). It functions in the pathway nitrogen metabolism; nitrate reduction (assimilation). Catalyzes the reduction of nitrite to ammonia, consuming six electrons in the process. The chain is Cytochrome c-552 from Salmonella arizonae (strain ATCC BAA-731 / CDC346-86 / RSK2980).